We begin with the raw amino-acid sequence, 145 residues long: Ribosomal RNA large subunit methyltransferase H (145 aa).

S-adenosyl-L-methionine is bound by residues leucine 64, glycine 93, and 112-117 (LSPLTF).

Belongs to the RNA methyltransferase RlmH family. In terms of assembly, homodimer.

Its subcellular location is the cytoplasm. It catalyses the reaction pseudouridine(1915) in 23S rRNA + S-adenosyl-L-methionine = N(3)-methylpseudouridine(1915) in 23S rRNA + S-adenosyl-L-homocysteine + H(+). Specifically methylates the pseudouridine at position 1915 (m3Psi1915) in 23S rRNA. In Prochlorococcus marinus (strain MIT 9211), this protein is Ribosomal RNA large subunit methyltransferase H.